The sequence spans 418 residues: Gene 68 protein (418 aa).

2 disordered regions span residues 230–304 (IPAP…IHTL) and 353–418 (DTFE…ERRA). The span at 241–250 (RPSEGGDARP) shows a compositional bias: basic and acidic residues. A compositionally biased stretch (basic residues) spans 257 to 266 (SRARSVHGRR). A compositionally biased stretch (basic and acidic residues) spans 353 to 369 (DTFEDNRRDELRHDDSR). Residues 395–404 (PHLRRSRGRG) are compositionally biased toward basic residues.

This sequence belongs to the herpesviridae US2 family.

The polypeptide is Gene 68 protein (Equine herpesvirus 1 (strain Ab4p) (EHV-1)).